Consider the following 83-residue polypeptide: Alpha-elapitoxin-Ppr1 (83 aa).

An N-terminal signal peptide occupies residues 1-21 (MKTLLLTLVVVTIVCLDLGYT). 4 cysteine pairs are disulfide-bonded: cysteine 24–cysteine 45, cysteine 38–cysteine 62, cysteine 64–cysteine 75, and cysteine 76–cysteine 81.

This sequence belongs to the three-finger toxin family. Short-chain subfamily. Type I alpha-neurotoxin sub-subfamily. Expressed by the venom gland.

It localises to the secreted. Its function is as follows. Bird-specific neurotoxin (tested on chicken) that acts as a pseudo-irreversible antagonist at the nicotinic acetylcholine receptor (nAChR) of the skeletal neuromuscular junction. Has no significant effect on the electrically-induced twitches of the rat isolated phrenic nerve-diaphragm preparation. The polypeptide is Alpha-elapitoxin-Ppr1 (Pseudechis porphyriacus (Red-bellied black snake)).